The sequence spans 223 residues: Agamous-like MADS-box protein AGL11 (223 aa).

The region spanning 1–61 is the MADS-box domain; it reads MGRGKIEIKR…GRVYEYSNNN (61 aa). A K-box domain is found at 87-177; the sequence is AQYYQQESAK…RTKIAEVERL (91 aa).

In terms of tissue distribution, expressed in flowers and seeds. Expressed in endotesta cell layer of developing seeds.

Its subcellular location is the nucleus. Functionally, probable transcription factor involved in seed development. Plays a role in seed morphogenesis by promoting the correct development of endotesta cell layer, which directs the further development of the seed coat, the endosperm, and consequently the embryo. The chain is Agamous-like MADS-box protein AGL11 from Vitis vinifera (Grape).